The following is a 128-amino-acid chain: Azurin (128 aa).

Residues 1 to 128 (AECKVTVDST…SMMKGTVTLK (128 aa)) enclose the Plastocyanin-like domain. A disulfide bridge connects residues Cys3 and Cys26. His46, Cys112, His117, and Met121 together coordinate Cu cation.

The protein localises to the periplasm. Functionally, transfers electrons from cytochrome c551 to cytochrome oxidase. This is Azurin from Pseudomonas putida (Arthrobacter siderocapsulatus).